The chain runs to 331 residues: Vitamin B12 import system permease protein BtuC (331 aa).

The next 9 helical transmembrane spans lie at 20-42, 62-84, 91-113, 118-140, 147-169, 189-208, 240-262, 277-299, and 306-325; these read IMSV…FLSP, LVAA…VLLG, GVLG…LPVL, IFML…IARA, RLLL…AFYF, ASWY…VWLC, LAIS…VGLV, YLLP…GARL, and LPLG…WMLV.

It belongs to the binding-protein-dependent transport system permease family. FecCD subfamily. The complex is composed of two ATP-binding proteins (BtuD), two transmembrane proteins (BtuC) and a solute-binding protein (BtuF).

It localises to the cell inner membrane. Part of the ABC transporter complex BtuCDF involved in vitamin B12 import. Involved in the translocation of the substrate across the membrane. The polypeptide is Vitamin B12 import system permease protein BtuC (Vibrio parahaemolyticus serotype O3:K6 (strain RIMD 2210633)).